We begin with the raw amino-acid sequence, 293 residues long: Cell division protein FtsQ (293 aa).

Residues methionine 1–arginine 27 lie on the Cytoplasmic side of the membrane. A helical membrane pass occupies residues leucine 28–phenylalanine 48. Residues glycine 49–glutamine 293 are Periplasmic-facing. The region spanning phenylalanine 81 to arginine 149 is the POTRA domain.

This sequence belongs to the FtsQ/DivIB family. FtsQ subfamily.

Its subcellular location is the cell inner membrane. Its function is as follows. Essential cell division protein. This Roseobacter litoralis (strain ATCC 49566 / DSM 6996 / JCM 21268 / NBRC 15278 / OCh 149) protein is Cell division protein FtsQ.